Reading from the N-terminus, the 241-residue chain is Protein GrpE (241 aa).

Positions 28 to 49 (QNCQKEETQTTNKDNQKEDETF) are enriched in basic and acidic residues. The tract at residues 28–78 (QNCQKEETQTTNKDNQKEDETFKNQPNKTKQTNTKQQKHLSKESSHQQITK) is disordered. Over residues 50–62 (KNQPNKTKQTNTK) the composition is skewed to low complexity.

It belongs to the GrpE family. In terms of assembly, homodimer.

The protein localises to the cytoplasm. In terms of biological role, participates actively in the response to hyperosmotic and heat shock by preventing the aggregation of stress-denatured proteins, in association with DnaK and GrpE. It is the nucleotide exchange factor for DnaK and may function as a thermosensor. Unfolded proteins bind initially to DnaJ; upon interaction with the DnaJ-bound protein, DnaK hydrolyzes its bound ATP, resulting in the formation of a stable complex. GrpE releases ADP from DnaK; ATP binding to DnaK triggers the release of the substrate protein, thus completing the reaction cycle. Several rounds of ATP-dependent interactions between DnaJ, DnaK and GrpE are required for fully efficient folding. This chain is Protein GrpE, found in Aster yellows witches'-broom phytoplasma (strain AYWB).